The sequence spans 138 residues: ATP synthase epsilon chain (138 aa).

The protein belongs to the ATPase epsilon chain family. As to quaternary structure, F-type ATPases have 2 components, CF(1) - the catalytic core - and CF(0) - the membrane proton channel. CF(1) has five subunits: alpha(3), beta(3), gamma(1), delta(1), epsilon(1). CF(0) has three main subunits: a, b and c.

It localises to the cell inner membrane. In terms of biological role, produces ATP from ADP in the presence of a proton gradient across the membrane. This Geobacter metallireducens (strain ATCC 53774 / DSM 7210 / GS-15) protein is ATP synthase epsilon chain.